Here is a 139-residue protein sequence, read N- to C-terminus: Transthyretin-like protein 5 (139 aa).

The signal sequence occupies residues 1-15; sequence MKLIILLCLVASSYA.

The protein belongs to the nematode transthyretin-like family.

The protein localises to the secreted. This chain is Transthyretin-like protein 5 (ttr-5), found in Caenorhabditis elegans.